The primary structure comprises 1469 residues: ATP-binding cassette transporter abc4 (1469 aa).

8 consecutive transmembrane segments (helical) span residues 21–40 (SLYYSLSDFSLSAISIFPTH), 55–74 (YSLESGLVCLYLYLIYRWIT), 94–114 (HGILLWLLSILFLGMTAFMFV), 121–141 (AFSDPPVKICLLAYSVHLFLL), 160–180 (VLLNLLLLPPIFHFYSYPFFF), 189–209 (YSPFLWFYFFITIVGNFIPLF), 296–316 (ILGMGVSSFMVSVCQFLSPIA), and 337–357 (WIVLLLTGPFLTSLFTQFYLF). One can recognise an ABC transmembrane type-1 1 domain in the interval 296–580 (ILGMGVSSFM…IAYLMRQIVQ (285 aa)). N386 carries an N-linked (GlcNAc...) asparagine glycan. 2 consecutive transmembrane segments (helical) span residues 412-432 (EFIHIIVRAPVEIAGSIYLLQ) and 441-461 (VGLALTVLTCSVPIVLGPLVA). N-linked (GlcNAc...) asparagine glycosylation occurs at N510. Transmembrane regions (helical) follow at residues 524–544 (VLVESLPVFSMFATFVVFTTI) and 553–573 (IAFTSISLFSFIRTQFSWIAY). The region spanning 611–840 (IGFFNASLTW…LAEQAASASE (230 aa)) is the ABC transporter 1 domain. N615 carries an N-linked (GlcNAc...) asparagine glycan. 648–655 (GPTGSGKS) contributes to the ATP binding site. N-linked (GlcNAc...) asparagine glycans are attached at residues N691, N790, and N815. The helical transmembrane segment at 894–914 (GFYVAAVLLFFVTTQATSILI) threads the bilayer. The region spanning 897 to 1176 (VAAVLLFFVT…FVRSCNSLQA (280 aa)) is the ABC transmembrane type-1 2 domain. N923 carries N-linked (GlcNAc...) asparagine glycosylation. The chain crosses the membrane as a helical span at residues 936–956 (FLFVYGTMLLAYSLLDFLRTV). The N-linked (GlcNAc...) asparagine glycan is linked to N1007. 5 consecutive transmembrane segments (helical) span residues 1009–1029 (SGWLFFSINCFLSVAGGILSV), 1033–1053 (MPIFMIPAVIVCLAGYYFGLL), 1065–1085 (ISIYTSPIFSLLGESIVGVSV), 1120–1140 (VAVRTDGISGLVGAIAGLIAL), and 1148–1168 (GVVGFSLNQAVIFSSSVLLFV). The ABC transporter 2 domain occupies 1214-1453 (FNHVSVSYSA…NGHFRRMCDG (240 aa)). Position 1246–1253 (1246–1253 (GRTGSGKS)) interacts with ATP. N-linked (GlcNAc...) asparagine glycosylation is present at N1355.

This sequence belongs to the ABC transporter superfamily. ABCC family. Conjugate transporter (TC 3.A.1.208) subfamily.

The protein localises to the vacuole membrane. The catalysed reaction is ATP + H2O + xenobioticSide 1 = ADP + phosphate + xenobioticSide 2.. Its function is as follows. Involved in detoxification of xenobiotics, and vacuolar sequestration of glutathione S-conjugates. Together with abc2, required for accumulation of a red pigment (ade pigment) in the vacuole of a mutant affected in the adenine biosynthetic pathway. The sequence is that of ATP-binding cassette transporter abc4 from Schizosaccharomyces pombe (strain 972 / ATCC 24843) (Fission yeast).